A 473-amino-acid polypeptide reads, in one-letter code: Photosystem II CP43 reaction center protein (473 aa).

The propeptide occupies 1-14 (MKTLYSPRRFYPVE). Thr-15 is subject to N-acetylthreonine. Thr-15 is modified (phosphothreonine). 5 helical membrane-spanning segments follow: residues 69–93 (LFEV…PHLA), 134–155 (LIGP…KDRN), 178–200 (KALF…RKIT), 255–275 (KPFA…LSYS), and 291–312 (WFNN…ASQA). A [CaMn4O5] cluster-binding site is contributed by Glu-367. A helical membrane pass occupies residues 447–471 (RARAAAAGFEKGIDRDLEPVLFMTP).

It belongs to the PsbB/PsbC family. PsbC subfamily. PSII is composed of 1 copy each of membrane proteins PsbA, PsbB, PsbC, PsbD, PsbE, PsbF, PsbH, PsbI, PsbJ, PsbK, PsbL, PsbM, PsbT, PsbX, PsbY, PsbZ, Psb30/Ycf12, at least 3 peripheral proteins of the oxygen-evolving complex and a large number of cofactors. It forms dimeric complexes. The cofactor is Binds multiple chlorophylls and provides some of the ligands for the Ca-4Mn-5O cluster of the oxygen-evolving complex. It may also provide a ligand for a Cl- that is required for oxygen evolution. PSII binds additional chlorophylls, carotenoids and specific lipids..

Its subcellular location is the plastid. The protein resides in the chloroplast thylakoid membrane. One of the components of the core complex of photosystem II (PSII). It binds chlorophyll and helps catalyze the primary light-induced photochemical processes of PSII. PSII is a light-driven water:plastoquinone oxidoreductase, using light energy to abstract electrons from H(2)O, generating O(2) and a proton gradient subsequently used for ATP formation. This Gnetum parvifolium (Small-leaved jointfir) protein is Photosystem II CP43 reaction center protein.